The primary structure comprises 355 residues: tRNA (guanine-N(1)-)-methyltransferase (355 aa).

S-adenosyl-L-methionine-binding positions include glycine 109 and 129-134 (IGDYVL).

This sequence belongs to the RNA methyltransferase TrmD family. In terms of assembly, homodimer.

It localises to the cytoplasm. The catalysed reaction is guanosine(37) in tRNA + S-adenosyl-L-methionine = N(1)-methylguanosine(37) in tRNA + S-adenosyl-L-homocysteine + H(+). Functionally, specifically methylates guanosine-37 in various tRNAs. The sequence is that of tRNA (guanine-N(1)-)-methyltransferase from Chlamydia caviae (strain ATCC VR-813 / DSM 19441 / 03DC25 / GPIC) (Chlamydophila caviae).